The following is a 260-amino-acid chain: Snake venom serine protease serpentokallikrein-1 (260 aa).

Residues 1-18 (MVLIRVLANLLILQLSYA) form the signal peptide. Residues 19–24 (QRTSEL) constitute a propeptide that is removed on maturation. Positions 25–251 (VIGGDECNIN…HLDWIKSIIA (227 aa)) constitute a Peptidase S1 domain. Intrachain disulfides connect C31-C165, C52-C68, C102-C258, C144-C212, C176-C191, and C202-C227. H67 (charge relay system) is an active-site residue. Residues N81 and N105 are each glycosylated (N-linked (GlcNAc...) asparagine). D112 functions as the Charge relay system in the catalytic mechanism. N156 and N172 each carry an N-linked (GlcNAc...) asparagine glycan. The active-site Charge relay system is S206.

Belongs to the peptidase S1 family. Snake venom subfamily. As to quaternary structure, monomer. As to expression, expressed by the venom gland.

The protein resides in the secreted. In terms of biological role, snake venom serine protease that may act in the hemostasis system of the prey. The polypeptide is Snake venom serine protease serpentokallikrein-1 (Protobothrops mucrosquamatus (Taiwan habu)).